The following is a 442-amino-acid chain: Trigger factor (442 aa).

The PPIase FKBP-type domain maps to 163-248 (YDRVTINYCI…IIKIEKKQEL (86 aa)).

This sequence belongs to the FKBP-type PPIase family. Tig subfamily.

The protein localises to the cytoplasm. The catalysed reaction is [protein]-peptidylproline (omega=180) = [protein]-peptidylproline (omega=0). Its function is as follows. Involved in protein export. Acts as a chaperone by maintaining the newly synthesized protein in an open conformation. Functions as a peptidyl-prolyl cis-trans isomerase. In Buchnera aphidicola subsp. Acyrthosiphon pisum (strain Tuc7), this protein is Trigger factor.